The following is a 20-amino-acid chain: Allergen Asp fl 2 (20 aa).

The chain is Allergen Asp fl 2 from Aspergillus flavus.